Consider the following 373-residue polypeptide: MKIEKIEVNSLQEAIEIVERRFGENAVILSSRVIRKNRFGFLPIFRKKILEVTVGIREEEDFRKEFERERELIKEIENLKKIVNELINNGEVKGEKIVEKGSDTYAPRVKRYLEKLVIKNISKNIAEKIIQDACGYDIDNKIYDFKDEPYTSLRESIEKNIKLNEEFIQNPPKVVALVGPTGVGKTTTLAKLAHLFKKNKKKVGIISLDCFRVGAFEQLKAFAEVLEVPFKLADSPRAFNIQLLEMDDRDVILVDTAGRSHYDVIRLKELETYFKVSDISVYLTLAANLSELVMYEAIMQFGMFSISGLIFTKLDETPYPGSMVNVAYRTQYPVVCFTMGQSIPEDIVVANYDYLVRLILEDEDEVRPATQLA.

GTP contacts are provided by residues 179 to 186 (GPTGVGKT), 255 to 259 (DTAGR), and 312 to 315 (TKLD).

The protein belongs to the GTP-binding SRP family.

It localises to the cell membrane. Its function is as follows. Necessary for flagellar biosynthesis. May be involved in translocation of the flagellum. This chain is Flagellar biosynthesis protein FlhF (flhF), found in Aquifex aeolicus (strain VF5).